The sequence spans 207 residues: Thiamine-phosphate synthase (207 aa).

4-amino-2-methyl-5-(diphosphooxymethyl)pyrimidine contacts are provided by residues 35-39 (QYRDK) and Asn-67. Mg(2+) contacts are provided by Asp-68 and Asp-86. Residue Thr-105 participates in 4-amino-2-methyl-5-(diphosphooxymethyl)pyrimidine binding. 132–134 (SVT) serves as a coordination point for 2-[(2R,5Z)-2-carboxy-4-methylthiazol-5(2H)-ylidene]ethyl phosphate. Lys-135 serves as a coordination point for 4-amino-2-methyl-5-(diphosphooxymethyl)pyrimidine. Gly-162 lines the 2-[(2R,5Z)-2-carboxy-4-methylthiazol-5(2H)-ylidene]ethyl phosphate pocket.

The protein belongs to the thiamine-phosphate synthase family. Requires Mg(2+) as cofactor.

It carries out the reaction 2-[(2R,5Z)-2-carboxy-4-methylthiazol-5(2H)-ylidene]ethyl phosphate + 4-amino-2-methyl-5-(diphosphooxymethyl)pyrimidine + 2 H(+) = thiamine phosphate + CO2 + diphosphate. The catalysed reaction is 2-(2-carboxy-4-methylthiazol-5-yl)ethyl phosphate + 4-amino-2-methyl-5-(diphosphooxymethyl)pyrimidine + 2 H(+) = thiamine phosphate + CO2 + diphosphate. It catalyses the reaction 4-methyl-5-(2-phosphooxyethyl)-thiazole + 4-amino-2-methyl-5-(diphosphooxymethyl)pyrimidine + H(+) = thiamine phosphate + diphosphate. It functions in the pathway cofactor biosynthesis; thiamine diphosphate biosynthesis; thiamine phosphate from 4-amino-2-methyl-5-diphosphomethylpyrimidine and 4-methyl-5-(2-phosphoethyl)-thiazole: step 1/1. Its function is as follows. Condenses 4-methyl-5-(beta-hydroxyethyl)thiazole monophosphate (THZ-P) and 2-methyl-4-amino-5-hydroxymethyl pyrimidine pyrophosphate (HMP-PP) to form thiamine monophosphate (TMP). In Pseudomonas putida (strain W619), this protein is Thiamine-phosphate synthase.